The following is a 459-amino-acid chain: UDP-glycosyltransferase 78D3 (459 aa).

Residues 338–340 (APQ), 355–363 (HGGWNSVLE), and 377–380 (FGDH) contribute to the UDP-alpha-D-glucose site.

Belongs to the UDP-glycosyltransferase family.

Possesses low quercetin 3-O-glucosyltransferase activity in vitro. This Arabidopsis thaliana (Mouse-ear cress) protein is UDP-glycosyltransferase 78D3 (UGT78D3).